A 204-amino-acid polypeptide reads, in one-letter code: N-(5'-phosphoribosyl)anthranilate isomerase (204 aa).

Belongs to the TrpF family.

It catalyses the reaction N-(5-phospho-beta-D-ribosyl)anthranilate = 1-(2-carboxyphenylamino)-1-deoxy-D-ribulose 5-phosphate. Its pathway is amino-acid biosynthesis; L-tryptophan biosynthesis; L-tryptophan from chorismate: step 3/5. In Oceanobacillus iheyensis (strain DSM 14371 / CIP 107618 / JCM 11309 / KCTC 3954 / HTE831), this protein is N-(5'-phosphoribosyl)anthranilate isomerase.